Consider the following 226-residue polypeptide: Large ribosomal subunit protein uL4 (226 aa).

The tract at residues 47 to 74 is disordered; the sequence is GTAKAKTRSEVSGGGRKPWPQKHTGRAR.

Belongs to the universal ribosomal protein uL4 family. Part of the 50S ribosomal subunit.

In terms of biological role, one of the primary rRNA binding proteins, this protein initially binds near the 5'-end of the 23S rRNA. It is important during the early stages of 50S assembly. It makes multiple contacts with different domains of the 23S rRNA in the assembled 50S subunit and ribosome. Functionally, forms part of the polypeptide exit tunnel. This is Large ribosomal subunit protein uL4 from Kosmotoga olearia (strain ATCC BAA-1733 / DSM 21960 / TBF 19.5.1).